The primary structure comprises 583 residues: MENTTDPENIPVSKPKYPTIRRILSQTFRILLLFSITTAYVLGYQALCHQGLLITFGLYGAAMLLHLLMQGIFANLEIRRIEKRDGVCSFKKTVALTITGYQENPDYLRQCLESCKGMKYPKDKLKIILVIDGNNEEDVYMMEIFKEVFHGEDVGTYVWQENYHTWNIPSEESEDSSSEISSFPWKNEGIQMVEELVRTKRCVCIMQQWGGKREVMYTAFRALGTSVDFILVCNSDIKLDKMATVELVKVLEDDDKNGAVGGDVRVWNRHDSFISFMSSLRYWMVFNMEIACQSYFDSVTYIRGSLGMYRNDILQAFLEFWYNKTFLGTRCPIGDDRFLTNRVLSMGYRTKYSHKSCAYAPCQYLRWLNQQTPWARSYFRMWFCNAQWWHQHHIWMTYESATGIFFPFFVTAVLIRLMYSSSLCNIVWLFLCIQIMSLLLSLYASWQSKKLSMVLMSLYSTLYIIWLLPCQLVALLTIAKSDWGTSGRKKVVNNYVPLFSLSIWAAVLLGGLCYSMYIGCRKDWSKPQANRELYHLLYGCAGYMAYWVLMTVIYCVSGSCCKMRSQAVPQTHDITSLSVSLLV.

At 1–29 the chain is on the cytoplasmic side; sequence MENTTDPENIPVSKPKYPTIRRILSQTFR. A helical transmembrane segment spans residues 30-50; the sequence is ILLLFSITTAYVLGYQALCHQ. Over 51–52 the chain is Extracellular; that stretch reads GL. A helical transmembrane segment spans residues 53 to 73; that stretch reads LITFGLYGAAMLLHLLMQGIF. Topologically, residues 74–393 are cytoplasmic; the sequence is ANLEIRRIEK…CNAQWWHQHH (320 aa). Residues 394-414 form a helical membrane-spanning segment; that stretch reads IWMTYESATGIFFPFFVTAVL. Residues 415–425 are Extracellular-facing; it reads IRLMYSSSLCN. A helical membrane pass occupies residues 426-446; that stretch reads IVWLFLCIQIMSLLLSLYASW. Topologically, residues 447 to 457 are cytoplasmic; sequence QSKKLSMVLMS. Residues 458-478 traverse the membrane as a helical segment; that stretch reads LYSTLYIIWLLPCQLVALLTI. Over 479–497 the chain is Extracellular; it reads AKSDWGTSGRKKVVNNYVP. A helical membrane pass occupies residues 498-518; the sequence is LFSLSIWAAVLLGGLCYSMYI. At 519–535 the chain is on the cytoplasmic side; that stretch reads GCRKDWSKPQANRELYH. Residues 536–556 traverse the membrane as a helical segment; that stretch reads LLYGCAGYMAYWVLMTVIYCV. The Extracellular segment spans residues 557–583; sequence SGSCCKMRSQAVPQTHDITSLSVSLLV.

This sequence belongs to the NodC/HAS family.

The protein localises to the membrane. This is Hyaluronan synthase-related protein (has-rs) from Xenopus laevis (African clawed frog).